The following is a 217-amino-acid chain: Transmembrane emp24 domain-containing protein p24delta6 (217 aa).

The N-terminal stretch at 1–26 (MAISPVLFIGLIYLAGGGSLFPGVEA) is a signal peptide. Over 27-186 (IWLTVPESGE…INEKTNTRVN (160 aa)) the chain is Lumenal. Positions 36–152 (ERCVYEEIQA…IEGVELEIRR (117 aa)) constitute a GOLD domain. Residues Asn-84 and Asn-116 are each glycosylated (N-linked (GlcNAc...) asparagine). The stretch at 138–160 (AKKEKIEGVELEIRRSTEYASAI) forms a coiled coil. Omega-N-methylated arginine is present on residues Arg-170 and Arg-175. The helical transmembrane segment at 187-207 (QLGLMSLGVAIVVSISQVLYL) threads the bilayer. The Cytoplasmic portion of the chain corresponds to 208–217 (KRYFLKKKLI). Positions 210-211 (YF) match the COPII vesicle coat-binding motif. The COPI vesicle coat-binding motif lies at 210 to 217 (YFLKKKLI).

Belongs to the EMP24/GP25L family. In terms of assembly, probably oligomerizes with other members of the EMP24/GP25L family. Associates with the COPI vesicle coat (coatomer). Associates with the COPII vesicle coat (coatomer).

Its subcellular location is the endoplasmic reticulum membrane. Involved in vesicular protein trafficking. Mainly functions in the early secretory pathway. Thought to act as cargo receptor at the lumenal side for incorporation of secretory cargo molecules into transport vesicles and to be involved in vesicle coat formation at the cytoplasmic side. The protein is Transmembrane emp24 domain-containing protein p24delta6 of Arabidopsis thaliana (Mouse-ear cress).